Here is a 175-residue protein sequence, read N- to C-terminus: Putative adenylate cyclase MJ0240 (175 aa).

Residues 1-175 form the CYTH domain; that stretch reads MIEVEIKVKI…RKSYLELRGL (175 aa). Residue Tyr-37 is the Proton acceptor of the active site.

Belongs to the adenylyl cyclase CyaB family.

The protein resides in the cytoplasm. It catalyses the reaction ATP = 3',5'-cyclic AMP + diphosphate. Could catalyze the biosynthesis of cyclic AMP (cAMP) from ATP. The sequence is that of Putative adenylate cyclase MJ0240 from Methanocaldococcus jannaschii (strain ATCC 43067 / DSM 2661 / JAL-1 / JCM 10045 / NBRC 100440) (Methanococcus jannaschii).